Consider the following 85-residue polypeptide: Beta-toxin BmKAs1 (85 aa).

An N-terminal signal peptide occupies residues 1–19 (MKIIIFLIVCSFVLIGVKA). The LCN-type CS-alpha/beta domain maps to 20-82 (DNGYLLNKYT…LWAYETNKCN (63 aa)). Disulfide bonds link Cys31–Cys81, Cys35–Cys56, Cys42–Cys63, and Cys46–Cys65.

This sequence belongs to the long (4 C-C) scorpion toxin superfamily. Sodium channel inhibitor family. A possible sulfoxide Met-85 on BmP09 could explain the difference of function between BmK AS-1 and BmP09. Expressed by the venom gland.

The protein localises to the secreted. In terms of biological role, beta toxins bind voltage-independently at site-4 of sodium channels (Nav) and shift the voltage of activation toward more negative potentials thereby affecting sodium channel activation and promoting spontaneous and repetitive firing. BmKAs1 also significantly stimulates the binding of [3H]-ryanodine to ryanodine receptors on the sarcoplasmic reticulum of the skeletal muscle. It also displays antinociceptive effect in rat models. Functionally, toxin BmP09 (which may be post-translationally modified) specifically and reversibly blocks large conductance calcium-dependent and voltage-dependent potassium channels (BK) but has no effect on sodium channels. In Olivierus martensii (Manchurian scorpion), this protein is Beta-toxin BmKAs1.